Consider the following 442-residue polypeptide: MTLASDFGFPSAISSSFTILEERYHNNFPNTLCVSSGQESMNNNPVPCQVFPLVSGGSSGGNLFSSSSGFCNGVYVSSSSQARPSVSTVPRDRITVAHVSGEGQRQECPVETHSLQLINQPQEQKIMTWSSDQIRGFFDFPVPDPQAASSRTMVSSKEVLSKCEWPDWADQLISDDSLEPNWSELLGDPNVLNLYSKIETQSSDIARQEIVFRNQHQVDPSMEPFNAKSPPASSMTSKQRMRWTPELHEAFVEAINQLGGSERATPKAVLKLINSPGLTVYHVKSHLQKYRTARYKPELSKDTEEPLVKNLKTIEDIKSLDLKTSIEITEALRLQMKVQKQLHEQLEIQRSLQLQIEEQGRYLQMMIEKQQKMQENKKDSTSSSSMPEADPSAPSPNLSQPFLHKATNSEPSITQKLQNGSSTMDQSESTSGTSNRKRVRED.

The HTH myb-type domain occupies 235-295 (MTSKQRMRWT…HLQKYRTARY (61 aa)). Residues 266–291 (PKAVLKLINSPGLTVYHVKSHLQKYR) constitute a DNA-binding region (H-T-H motif). Residues 329 to 349 (TEALRLQMKVQKQLHEQLEIQ) form a coiled coil region. The LHEQLE motif lies at 342-347 (LHEQLE). A compositionally biased stretch (basic and acidic residues) spans 370-380 (QQKMQENKKDS). Positions 370–442 (QQKMQENKKD…TSNRKRVRED (73 aa)) are disordered. Polar residues predominate over residues 395–434 (SPNLSQPFLHKATNSEPSITQKLQNGSSTMDQSESTSGTS).

The protein belongs to the MYB-CC family.

The protein resides in the nucleus. This Arabidopsis thaliana (Mouse-ear cress) protein is Myb family transcription factor PHL13.